Consider the following 128-residue polypeptide: Holo-[acyl-carrier-protein] synthase (128 aa).

Asp7 and Glu55 together coordinate Mg(2+).

It belongs to the P-Pant transferase superfamily. AcpS family. The cofactor is Mg(2+).

Its subcellular location is the cytoplasm. The enzyme catalyses apo-[ACP] + CoA = holo-[ACP] + adenosine 3',5'-bisphosphate + H(+). Functionally, transfers the 4'-phosphopantetheine moiety from coenzyme A to a Ser of acyl-carrier-protein. This Moorella thermoacetica (strain ATCC 39073 / JCM 9320) protein is Holo-[acyl-carrier-protein] synthase.